Reading from the N-terminus, the 304-residue chain is Bifunctional protein FolD (304 aa).

NADP(+)-binding positions include 167–169 (GRS), serine 192, and isoleucine 233.

It belongs to the tetrahydrofolate dehydrogenase/cyclohydrolase family. Homodimer.

It carries out the reaction (6R)-5,10-methylene-5,6,7,8-tetrahydrofolate + NADP(+) = (6R)-5,10-methenyltetrahydrofolate + NADPH. The catalysed reaction is (6R)-5,10-methenyltetrahydrofolate + H2O = (6R)-10-formyltetrahydrofolate + H(+). It functions in the pathway one-carbon metabolism; tetrahydrofolate interconversion. In terms of biological role, catalyzes the oxidation of 5,10-methylenetetrahydrofolate to 5,10-methenyltetrahydrofolate and then the hydrolysis of 5,10-methenyltetrahydrofolate to 10-formyltetrahydrofolate. In Rhodospirillum centenum (strain ATCC 51521 / SW), this protein is Bifunctional protein FolD.